Consider the following 314-residue polypeptide: Acetaldehyde dehydrogenase (314 aa).

14–17 (SGNI) is a binding site for NAD(+). The active-site Acyl-thioester intermediate is cysteine 132. NAD(+) contacts are provided by residues 163–171 (SAGPGTRAN) and asparagine 291.

The protein belongs to the acetaldehyde dehydrogenase family.

It catalyses the reaction acetaldehyde + NAD(+) + CoA = acetyl-CoA + NADH + H(+). The protein is Acetaldehyde dehydrogenase of Polaromonas sp. (strain JS666 / ATCC BAA-500).